Here is a 264-residue protein sequence, read N- to C-terminus: Phosphonoacetaldehyde hydrolase (264 aa).

Asp-9 (nucleophile) is an active-site residue. Mg(2+) contacts are provided by Asp-9 and Ala-11. Catalysis depends on Lys-50, which acts as the Schiff-base intermediate with substrate. Asp-183 contributes to the Mg(2+) binding site.

It belongs to the HAD-like hydrolase superfamily. PhnX family. Homodimer. Mg(2+) serves as cofactor.

The catalysed reaction is phosphonoacetaldehyde + H2O = acetaldehyde + phosphate + H(+). Its function is as follows. Involved in phosphonate degradation. In Bacillus cereus (strain AH820), this protein is Phosphonoacetaldehyde hydrolase.